Here is a 314-residue protein sequence, read N- to C-terminus: Fumarylacetoacetate hydrolase domain-containing protein 2 (314 aa).

Glu159, Glu161, and Asp190 together coordinate a divalent metal cation. Lys203 bears the N6-acetyllysine; alternate mark. Lys203 carries the post-translational modification N6-succinyllysine; alternate. Lys234 carries the N6-acetyllysine modification.

The protein belongs to the FAH family. Ca(2+) is required as a cofactor. It depends on Mg(2+) as a cofactor.

In terms of biological role, may have hydrolase activity. In Pongo abelii (Sumatran orangutan), this protein is Fumarylacetoacetate hydrolase domain-containing protein 2 (FAHD2).